A 748-amino-acid chain; its full sequence is MLETNNHTNAWQGFKTGRWNKNIDVREFIQLNYSLYEGDDEFLEGPTKATETLWDQVMQLSKEERERGGMWDMDTKVASTITSHDAGYLDKDLEKVVGVQTEKPFKRSMQPFGGIRMAKAACEAYGYELDPETEKIFTEYRKTHNQGVFDAYSREMLNCRKAGIITGLPDAYGRGRIIGDYRRVALYGVDFLMEQKLKDFNTMSTEMSEDVIRLREELTEQYRSLQDLKELGQKYGFDISRPATNFKEAVQWLYLAYLAAIKEQNGAAMSLGRTSTFLDIYAERDLQNGDITEQEVQEIIDHFIMKLRIVKFARTPEYNELFSGDPTWVTESIGGVGIDGRPMVTKNSFRFLHSLDNLGPAPEPNLTVLWSTRLPENFKIYCAKMSIKTSSIQYENDDLMRESYGDDYGIACCVSAMKIGKQMQFFGARANLAKALLYAINGGKDEKSGKQVGPSYEGIKSDVLDYDEVFERYEKMMDWLAGVYINSLNIIHYMHDKYSYERLEMALHDTEIIRTMATGIAGLSVAADSLSAIKYAQVKPIRNEEGLVTDFEIEGDFPKYGNNDSRVDEIAVDLVERFMTKLRSHKTYRNSEHTMSVLTITSNVVYGKKTGNTPDGRKAGEPFAPGANPMHGRDQKGALSSLSSVAKIPYDCCKDGISNTFSIVPKSLGKEEADQNKNLTSMLDGYAMQHGHHLNINVFNRETLIDAMEHPEEYPQLTIRVSGYAVNFIKLTREQQLDVISRTFHESM.

The region spanning 5–618 is the PFL domain; that stretch reads NNHTNAWQGF…KTGNTPDGRK (614 aa). Cys-412 (S-acetylcysteine intermediate) is an active-site residue. Cys-413 functions as the Cysteine radical intermediate in the catalytic mechanism. One can recognise a Glycine radical domain in the interval 625–748; sequence PGANPMHGRD…VISRTFHESM (124 aa). The residue at position 723 (Gly-723) is a Glycine radical.

This sequence belongs to the glycyl radical enzyme (GRE) family. PFL subfamily. Homodimer.

The protein resides in the cytoplasm. It carries out the reaction formate + acetyl-CoA = pyruvate + CoA. It participates in fermentation; pyruvate fermentation; formate from pyruvate: step 1/1. In terms of biological role, catalyzes the conversion of pyruvate to formate and acetyl-CoA. The chain is Formate acetyltransferase (pflB) from Staphylococcus epidermidis (strain ATCC 12228 / FDA PCI 1200).